Here is a 285-residue protein sequence, read N- to C-terminus: Small ribosomal subunit protein mS23 (285 aa).

The protein belongs to the mitochondrion-specific ribosomal protein mS23 family. As to quaternary structure, component of the mitochondrial small ribosomal subunit.

The protein resides in the mitochondrion. The sequence is that of Small ribosomal subunit protein mS23 (RSM25) from Debaryomyces hansenii (strain ATCC 36239 / CBS 767 / BCRC 21394 / JCM 1990 / NBRC 0083 / IGC 2968) (Yeast).